Here is a 199-residue protein sequence, read N- to C-terminus: 7-methyl-GTP pyrophosphatase (199 aa).

The Proton acceptor role is filled by D72.

It belongs to the Maf family. YceF subfamily. The cofactor is a divalent metal cation.

Its subcellular location is the cytoplasm. The catalysed reaction is N(7)-methyl-GTP + H2O = N(7)-methyl-GMP + diphosphate + H(+). Its function is as follows. Nucleoside triphosphate pyrophosphatase that hydrolyzes 7-methyl-GTP (m(7)GTP). May have a dual role in cell division arrest and in preventing the incorporation of modified nucleotides into cellular nucleic acids. The polypeptide is 7-methyl-GTP pyrophosphatase (Alkalilimnicola ehrlichii (strain ATCC BAA-1101 / DSM 17681 / MLHE-1)).